The following is a 290-amino-acid chain: Mitochondrial dicarboxylate carrier (290 aa).

Solcar repeat units follow at residues 6-90, 101-188, and 197-281; these read TKRL…VKKQ, QKAL…IKQT, and DNLQ…LRLK. The next 3 membrane-spanning stretches (helical) occupy residues 12–32, 65–84, and 103–123; these read WYFG…LDLL, GVSA…FGIY, and ALLA…GDLV. N6-acetyllysine is present on Lys-159. Transmembrane regions (helical) follow at residues 163–182, 203–223, and 256–276; these read GATM…LSFY, FASS…LDVM, and GFIP…IFFE.

The protein belongs to the mitochondrial carrier (TC 2.A.29) family.

It localises to the mitochondrion inner membrane. It carries out the reaction (S)-malate(in) + phosphate(out) = (S)-malate(out) + phosphate(in). The catalysed reaction is malonate(out) + (S)-malate(in) = malonate(in) + (S)-malate(out). It catalyses the reaction (S)-malate(in) + succinate(out) = (S)-malate(out) + succinate(in). The enzyme catalyses (S)-malate(in) + sulfate(out) = (S)-malate(out) + sulfate(in). It carries out the reaction 2 thiosulfate(out) + (S)-malate(in) = 2 thiosulfate(in) + (S)-malate(out). The catalysed reaction is malonate(out) + phosphate(in) = malonate(in) + phosphate(out). It catalyses the reaction succinate(out) + phosphate(in) = succinate(in) + phosphate(out). The enzyme catalyses sulfate(out) + phosphate(in) = sulfate(in) + phosphate(out). It carries out the reaction 2 thiosulfate(out) + phosphate(in) = 2 thiosulfate(in) + phosphate(out). The catalysed reaction is malonate(out) + succinate(in) = malonate(in) + succinate(out). Its function is as follows. Catalyzes the electroneutral exchange or flux of physiologically important metabolites such as dicarboxylates (malonate, malate, succinate), inorganic sulfur-containing anions, and phosphate, across mitochondrial inner membrane. Plays an important role in gluconeogenesis, fatty acid metabolism, urea synthesis, and sulfur metabolism, by supplying the substrates for the different metabolic processes. This is Mitochondrial dicarboxylate carrier from Caenorhabditis elegans.